We begin with the raw amino-acid sequence, 142 residues long: Putative pre-16S rRNA nuclease (142 aa).

It belongs to the YqgF nuclease family.

It is found in the cytoplasm. Functionally, could be a nuclease involved in processing of the 5'-end of pre-16S rRNA. The chain is Putative pre-16S rRNA nuclease from Chlorobaculum tepidum (strain ATCC 49652 / DSM 12025 / NBRC 103806 / TLS) (Chlorobium tepidum).